The sequence spans 200 residues: Large ribosomal subunit protein uL4 (200 aa).

Residues 38-68 are disordered; it reads GRQGSKQQKTRSDVRGGGKRPWRQKGTGRAR. Basic residues predominate over residues 54–65; it reads GGKRPWRQKGTG.

This sequence belongs to the universal ribosomal protein uL4 family. Part of the 50S ribosomal subunit.

Its function is as follows. One of the primary rRNA binding proteins, this protein initially binds near the 5'-end of the 23S rRNA. It is important during the early stages of 50S assembly. It makes multiple contacts with different domains of the 23S rRNA in the assembled 50S subunit and ribosome. Functionally, forms part of the polypeptide exit tunnel. This Pseudomonas fluorescens (strain SBW25) protein is Large ribosomal subunit protein uL4.